The following is a 231-amino-acid chain: Ion-translocating oxidoreductase complex subunit E (231 aa).

Transmembrane regions (helical) follow at residues 18 to 38 (GLVQ…VTNA), 39 to 59 (LGLG…VSLV), 69 to 89 (IPVF…LINA), 93 to 113 (GLYL…VIIG), 128 to 148 (AFDG…LGAG), and 182 to 202 (PFLL…LIAG).

This sequence belongs to the NqrDE/RnfAE family. The complex is composed of six subunits: RnfA, RnfB, RnfC, RnfD, RnfE and RnfG.

It is found in the cell inner membrane. Its function is as follows. Part of a membrane-bound complex that couples electron transfer with translocation of ions across the membrane. The protein is Ion-translocating oxidoreductase complex subunit E of Shewanella denitrificans (strain OS217 / ATCC BAA-1090 / DSM 15013).